Here is a 484-residue protein sequence, read N- to C-terminus: Probable metalloprotease ARX1 (484 aa).

It belongs to the peptidase M24 family. Component of the nucleoplasmic and cytoplasmic pre-60S ribosomal particles.

The protein localises to the cytoplasm. The protein resides in the nucleus. Functionally, probable metalloprotease involved in proper assembly of pre-ribosomal particles during the biogenesis of the 60S ribosomal subunit. Accompanies the pre-60S particles to the cytoplasm. This is Probable metalloprotease ARX1 (ARX1) from Yarrowia lipolytica (strain CLIB 122 / E 150) (Yeast).